The primary structure comprises 247 residues: Histone acetyltransferase MCC1 (247 aa).

The N-acetyltransferase domain occupies 25 to 198 (IHYRPINPND…DAFLFVYFIN (174 aa)).

The protein belongs to the acetyltransferase family.

It catalyses the reaction L-lysyl-[protein] + acetyl-CoA = N(6)-acetyl-L-lysyl-[protein] + CoA + H(+). In terms of biological role, histone acetyltransferase that probably regulates acetylation status of histone H3 during meiosis. Histone acetylation may influence recombination and chromosome segregation. The protein is Histone acetyltransferase MCC1 (MCC1) of Arabidopsis thaliana (Mouse-ear cress).